The following is a 168-amino-acid chain: RNA pyrophosphohydrolase (168 aa).

Residues Pro8–Arg160 form the Nudix hydrolase domain. The short motif at Gly47–Ser68 is the Nudix box element.

This sequence belongs to the Nudix hydrolase family. RppH subfamily. It depends on a divalent metal cation as a cofactor.

In terms of biological role, accelerates the degradation of transcripts by removing pyrophosphate from the 5'-end of triphosphorylated RNA, leading to a more labile monophosphorylated state that can stimulate subsequent ribonuclease cleavage. The polypeptide is RNA pyrophosphohydrolase (Azorhizobium caulinodans (strain ATCC 43989 / DSM 5975 / JCM 20966 / LMG 6465 / NBRC 14845 / NCIMB 13405 / ORS 571)).